The primary structure comprises 610 residues: UvrABC system protein C (610 aa).

Positions 16–94 (SQPGVYRMYD…IKLYQPRYNV (79 aa)) constitute a GIY-YIG domain. The UVR domain maps to 204-239 (DQVLTQLISRMETASQNLEFEEAARIRDQIQAVRRV).

The protein belongs to the UvrC family. As to quaternary structure, interacts with UvrB in an incision complex.

The protein resides in the cytoplasm. Functionally, the UvrABC repair system catalyzes the recognition and processing of DNA lesions. UvrC both incises the 5' and 3' sides of the lesion. The N-terminal half is responsible for the 3' incision and the C-terminal half is responsible for the 5' incision. The protein is UvrABC system protein C of Shigella boydii serotype 18 (strain CDC 3083-94 / BS512).